Consider the following 292-residue polypeptide: DCN1-like protein 4 (292 aa).

The segment at 43–83 (HQTGSLRSCSSSDCFNKVMPPRKKRRPASGDDLSAKKSRHD) is disordered. Polar residues predominate over residues 45–56 (TGSLRSCSSSDC). Lys-95 participates in a covalent cross-link: Glycyl lysine isopeptide (Lys-Gly) (interchain with G-Cter in SUMO2). The region spanning 101–287 (FSSKRCLEWF…LLDEFVEWYK (187 aa)) is the DCUN1 domain.

In terms of assembly, interacts (via the DCUN1 domain) with the unneddylated cullins: interacts with CUL1, CUL2, CUL3, CUL4A, CUL4B and CUL5; these interactions promote the cullin neddylation and the identity of the cullin dictates the affinity of the interaction. Interacts with RBX1 and RNF7. Interacts with CAND1; this interaction is bridged by cullins such as CUL3 and strongly inhibits the neddylation of CUL3. These CAND-cullin-DCNL complexes can only be neddylated in the presence of a substrate adapter. Interacts (via DCUN1 domain) with UBE2M (N-terminally acetylated form) and probably with UBE2F (N-terminally acetylated form).

It localises to the nucleus. Contributes to the neddylation of all cullins by transferring NEDD8 from N-terminally acetylated NEDD8-conjugating E2s enzyme to different cullin C-terminal domain-RBX complexes which are necessary for the activation of cullin-RING E3 ubiquitin ligases (CRLs). In Homo sapiens (Human), this protein is DCN1-like protein 4.